The sequence spans 396 residues: uncharacterized protein (396 aa).

This is an uncharacterized protein from Psittacid herpesvirus 1 (isolate Amazon parrot/-/97-0001/1997) (PsHV-1).